The following is a 296-amino-acid chain: Acetylglutamate kinase (296 aa).

Substrate-binding positions include 69–70 (GG), arginine 91, and asparagine 193.

This sequence belongs to the acetylglutamate kinase family. ArgB subfamily.

It is found in the cytoplasm. The catalysed reaction is N-acetyl-L-glutamate + ATP = N-acetyl-L-glutamyl 5-phosphate + ADP. It participates in amino-acid biosynthesis; L-arginine biosynthesis; N(2)-acetyl-L-ornithine from L-glutamate: step 2/4. Its function is as follows. Catalyzes the ATP-dependent phosphorylation of N-acetyl-L-glutamate. In Verminephrobacter eiseniae (strain EF01-2), this protein is Acetylglutamate kinase.